Reading from the N-terminus, the 85-residue chain is uncharacterized protein (85 aa).

This is an uncharacterized protein from Shigella flexneri.